The primary structure comprises 291 residues: Nucleotide-binding protein MSMEG_3079/MSMEI_3001 (291 aa).

Gly-14 to Gly-21 is an ATP binding site. Residue Asp-65 to Ser-68 participates in GTP binding.

Belongs to the RapZ-like family.

Displays ATPase and GTPase activities. The polypeptide is Nucleotide-binding protein MSMEG_3079/MSMEI_3001 (Mycolicibacterium smegmatis (strain ATCC 700084 / mc(2)155) (Mycobacterium smegmatis)).